The primary structure comprises 351 residues: Probable aldo-keto reductase 2 (351 aa).

Residue Y67 is the Proton donor of the active site. H134 contacts substrate. 213 to 223 (SPLGRGFFSAG) lines the NADP(+) pocket. The tract at residues 317–351 (YASTDDVRGDRYPQAMANTTWQNSETPPLSSWKAQ) is disordered. Polar residues predominate over residues 332–351 (MANTTWQNSETPPLSSWKAQ).

Belongs to the aldo/keto reductase family.

The protein is Probable aldo-keto reductase 2 of Oryza sativa subsp. japonica (Rice).